The following is a 300-amino-acid chain: Acetyl-coenzyme A carboxylase carboxyl transferase subunit beta 2 (300 aa).

Residues 26–294 (VWIKCPSCRE…ATAHKSEPIV (269 aa)) enclose the CoA carboxyltransferase N-terminal domain. Cys30, Cys33, Cys49, and Cys51 together coordinate Zn(2+). A C4-type zinc finger spans residues 30–51 (CPSCRELIYHKQLAERMKVCRC).

This sequence belongs to the AccD/PCCB family. In terms of assembly, acetyl-CoA carboxylase is a heterohexamer composed of biotin carboxyl carrier protein (AccB), biotin carboxylase (AccC) and two subunits each of ACCase subunit alpha (AccA) and ACCase subunit beta (AccD). Requires Zn(2+) as cofactor.

Its subcellular location is the cytoplasm. It catalyses the reaction N(6)-carboxybiotinyl-L-lysyl-[protein] + acetyl-CoA = N(6)-biotinyl-L-lysyl-[protein] + malonyl-CoA. It functions in the pathway lipid metabolism; malonyl-CoA biosynthesis; malonyl-CoA from acetyl-CoA: step 1/1. In terms of biological role, component of the acetyl coenzyme A carboxylase (ACC) complex. Biotin carboxylase (BC) catalyzes the carboxylation of biotin on its carrier protein (BCCP) and then the CO(2) group is transferred by the transcarboxylase to acetyl-CoA to form malonyl-CoA. This chain is Acetyl-coenzyme A carboxylase carboxyl transferase subunit beta 2, found in Roseiflexus sp. (strain RS-1).